Reading from the N-terminus, the 822-residue chain is Probable RING finger protein 207 homolog (822 aa).

The RING-type zinc-finger motif lies at 8–42 (CTICKNEFEEPILLSCQHTTCRKCSTGSPSCKSCS). The B box-type 1; atypical zinc-finger motif lies at 68 to 115 (EEMEECANCEQISLPMFYCETCQQSLCLVCRNVTHQARMFSSHKIISS). Zn(2+) is bound by residues C73, C76, C97, and H102. The B box-type 2; degenerate zinc finger occupies 122 to 164 (YSSSLCKDHNEPYILYCSDVRKLVCIQCFNGRPLEERHSFISI). Coiled-coil stretches lie at residues 526 to 558 (NSQNRILAIEKEEENRRLNQEAKKKEELAGQSA) and 738 to 769 (DKDEVIEKEEIEKETEKEKKKVIRRRVKKVSE).

This Caenorhabditis elegans protein is Probable RING finger protein 207 homolog.